Here is a 1490-residue protein sequence, read N- to C-terminus: ABC transporter CDR4 (1490 aa).

A compositionally biased stretch (polar residues) spans 1-12; sequence MADADTSSNSSK. Disordered stretches follow at residues 1 to 26 and 53 to 75; these read MADA…GTYQ and LKRQ…LSGK. At 1–516 the chain is on the cytoplasmic side; that stretch reads MADADTSSNS…NILRIKGNPS (516 aa). The span at 58–67 shows a compositional bias: basic and acidic residues; sequence SRQESQKSNE. The ABC transporter 1 domain occupies 151-407; sequence PKYLSLFFRE…FIDMGYECPQ (257 aa). 6 helical membrane passes run 517–537, 551–571, 601–621, 626–646, 659–679, and 767–787; these read IHLF…SIFY, AALF…IFSL, LPTK…MVNF, GNFF…SHIF, AMTP…FVIP, and FGIV…LCEI. At 788-1182 the chain is on the cytoplasmic side; the sequence is NKGAMQKGEI…VFEQNWRTPS (395 aa). The 245-residue stretch at 846–1090 folds into the ABC transporter 2 domain; the sequence is FFWRDLTYQV…LINYFEKYGA (245 aa). 882 to 889 is an ATP binding site; that stretch reads GASGAGKT. Helical transmembrane passes span 1183-1203, 1217-1237, and 1268-1288; these read YLYS…FSFY, FSVF…LPTF, and IPWN…PVGL. N1291 carries N-linked (GlcNAc...) asparagine glycosylation. 3 helical membrane passes run 1304 to 1324, 1333 to 1353, and 1370 to 1390; these read FMWF…QLCI, AANL…VLVT, and FTYL…VTCA. A glycan (N-linked (GlcNAc...) asparagine) is linked at N1424. Residues 1455–1475 traverse the membrane as a helical segment; it reads IGIYIAFIGINIIGTFILYWF.

Belongs to the ABC transporter superfamily. ABCG family. PDR (TC 3.A.1.205) subfamily.

It localises to the membrane. In Candida albicans (Yeast), this protein is ABC transporter CDR4 (CDR4).